Reading from the N-terminus, the 496-residue chain is T-cell activation inhibitor, mitochondrial (496 aa).

The stretch at 404 to 437 (KAQQARENMKRKEELKVIENELIQASTKKFSLEK) forms a coiled coil.

It is found in the mitochondrion. Its function is as follows. May regulate T-cell apoptosis. This is T-cell activation inhibitor, mitochondrial (TCAIM) from Homo sapiens (Human).